The sequence spans 231 residues: Probable calcium-binding protein CML21 (231 aa).

4 EF-hand domains span residues 54-89 (DGLRNCKAIFQEFDEDSNGSIDHTELKNCIRKLEIS), 90-125 (FDEEEINDLFKACDINEDMGITFTEFIVLLCLVYLL), 145-180 (PTFETLVDTFVFLDENKDGYVSREEMVRAIDESGER), and 181-216 (SSGRIAMKRFEEMDWDKNGMVNFKEFLFAFTQWVGI). 5 residues coordinate Ca(2+): aspartate 67, aspartate 69, asparagine 71, serine 73, and glutamate 78. The Ca(2+) site is built by aspartate 158, asparagine 160, aspartate 162, tyrosine 164, glutamate 169, aspartate 194, aspartate 196, asparagine 198, methionine 200, and glutamate 205.

Its function is as follows. Potential calcium sensor. The chain is Probable calcium-binding protein CML21 (CML21) from Arabidopsis thaliana (Mouse-ear cress).